Reading from the N-terminus, the 342-residue chain is Cathepsin B-like cysteine proteinase 1 (342 aa).

Positions Met-1–Ala-18 are cleaved as a signal peptide. Positions Asp-19 to Asp-86 are cleaved as a propeptide — activation peptide. Asn-99 carries N-linked (GlcNAc...) asparagine glycosylation. Cystine bridges form between Cys-100-Cys-128, Cys-111-Cys-156, Cys-147-Cys-214, Cys-148-Cys-152, Cys-185-Cys-218, and Cys-193-Cys-205. Cys-114 is an active-site residue. A glycan (N-linked (GlcNAc...) asparagine) is linked at Asn-138. An N-linked (GlcNAc...) asparagine glycan is attached at Asn-198. His-285 is a catalytic residue. A glycan (N-linked (GlcNAc...) asparagine) is linked at Asn-296. Asn-305 is a catalytic residue.

Belongs to the peptidase C1 family.

Expression of the protease correlates with blood-feeding and suggests a role for the protease in blood digestion. This chain is Cathepsin B-like cysteine proteinase 1 (AC-1), found in Haemonchus contortus (Barber pole worm).